The primary structure comprises 312 residues: UDP-N-acetylenolpyruvoylglucosamine reductase (312 aa).

In terms of domain architecture, FAD-binding PCMH-type spans 37–205 (VGGPADALVV…VCAEFALCPG (169 aa)). Arginine 185 is a catalytic residue. Serine 234 acts as the Proton donor in catalysis. Glutamate 304 is a catalytic residue.

This sequence belongs to the MurB family. FAD is required as a cofactor.

Its subcellular location is the cytoplasm. The catalysed reaction is UDP-N-acetyl-alpha-D-muramate + NADP(+) = UDP-N-acetyl-3-O-(1-carboxyvinyl)-alpha-D-glucosamine + NADPH + H(+). Its pathway is cell wall biogenesis; peptidoglycan biosynthesis. Cell wall formation. This chain is UDP-N-acetylenolpyruvoylglucosamine reductase, found in Syntrophus aciditrophicus (strain SB).